A 216-amino-acid chain; its full sequence is Cytochrome c oxidase assembly protein CtaG (216 aa).

A compositionally biased stretch (low complexity) spans 1 to 23 (MTDAPQHPQQPATGTPATPKAAP). A disordered region spans residues 1–24 (MTDAPQHPQQPATGTPATPKAAPR). Over 1–26 (MTDAPQHPQQPATGTPATPKAAPRVG) the chain is Cytoplasmic. Residues 27–49 (RDVRIGATCGLLVALMVGAAYAA) form a helical; Signal-anchor for type II membrane protein membrane-spanning segment. Topologically, residues 50 to 216 (VPFYNWFCRA…SEPDRPGGSI (167 aa)) are periplasmic.

It belongs to the COX11/CtaG family.

The protein resides in the cell inner membrane. Its function is as follows. Exerts its effect at some terminal stage of cytochrome c oxidase synthesis, probably by being involved in the insertion of the copper B into subunit I. The sequence is that of Cytochrome c oxidase assembly protein CtaG from Nitrobacter hamburgensis (strain DSM 10229 / NCIMB 13809 / X14).